A 466-amino-acid chain; its full sequence is 20-hydroxyecdysone protein (466 aa).

The signal sequence occupies residues 1-16; that stretch reads MKPVALILVFLAISQA. One copy of the 1; approximate repeat lies at 48-50; the sequence is EVK. Residues 48–157 are 16 X repeats; that stretch reads EVKAEEVKPE…EIKKEATEIK (110 aa). A 2; approximate repeat occupies 53–55; it reads EVK. Residues 55–94 are disordered; sequence KPEEVKPIAQEEKAKDLKEEVKPEIKPEIKEQPKPDIKDE. One copy of the 3; approximate repeat lies at 58–60; it reads EVK. The 4; approximate repeat unit spans residues 70-72; sequence DLK. Residues 74 to 76 form a 5; approximate repeat; the sequence is EVK. Residues 78–80 form a 6; approximate repeat; sequence EIK. One copy of the 7; approximate repeat lies at 82-84; sequence EIK. The stretch at 90–92 is one 8; approximate repeat; that stretch reads DIK. A 9; approximate repeat occupies 94-96; sequence EIK. The stretch at 98 to 100 is one 10; approximate repeat; it reads DLK. An 11; approximate repeat occupies 102–104; sequence DIK. A 12; approximate repeat occupies 106–108; it reads ELK. Positions 119-220 are disordered; that stretch reads PNAKPLELKE…QQSTTQGNFV (102 aa). Residues 124-160 are compositionally biased toward basic and acidic residues; it reads LELKEKSLEAEEKPQEIKEEVQQPEIKKEATEIKEEP. One copy of the 13; approximate repeat lies at 125–127; that stretch reads ELK. The 14; approximate repeat unit spans residues 139–141; it reads EIK. A 15; approximate repeat occupies 148–150; that stretch reads EIK. The 16; approximate repeat unit spans residues 155–157; it reads EIK. Residues 170 to 180 are compositionally biased toward low complexity; it reads AEETVVVPAEE. Residues 185–194 show a composition bias toward polar residues; that stretch reads PVEQEQSENQ. Low complexity predominate over residues 203–216; sequence QATQATPTQQSTTQ. N-linked (GlcNAc...) asparagine glycosylation is found at Asn-294 and Asn-352. The segment at 378 to 435 is disordered; sequence RPQNAPAAAPATQATEKPAVDDKIDPANDEVGEFVPESDNELRASGENIDDSFEDAGV. Low complexity predominate over residues 379-394; sequence PQNAPAAAPATQATEK. Acidic residues predominate over residues 404–416; the sequence is ANDEVGEFVPESD.

It is found in the secreted. Probably has an essential role in embryogenesis, induces morphogenesis of imaginal disks, and may participate in multimolecular aggregates. This Drosophila melanogaster (Fruit fly) protein is 20-hydroxyecdysone protein (ImpE2).